Consider the following 360-residue polypeptide: Alanine racemase (360 aa).

Residue Lys-34 is the Proton acceptor; specific for D-alanine of the active site. Lys-34 is modified (N6-(pyridoxal phosphate)lysine). Arg-129 is a substrate binding site. The active-site Proton acceptor; specific for L-alanine is the Tyr-254. Position 302 (Met-302) interacts with substrate.

This sequence belongs to the alanine racemase family. Pyridoxal 5'-phosphate serves as cofactor.

The catalysed reaction is L-alanine = D-alanine. Its pathway is amino-acid biosynthesis; D-alanine biosynthesis; D-alanine from L-alanine: step 1/1. Catalyzes the interconversion of L-alanine and D-alanine. May also act on other amino acids. The protein is Alanine racemase (alr) of Pectobacterium carotovorum subsp. carotovorum (strain PC1).